A 324-amino-acid polypeptide reads, in one-letter code: Beta-ketoacyl-[acyl-carrier-protein] synthase III (324 aa).

Residues C113 and H251 contribute to the active site. Positions 252–256 (QANKR) are ACP-binding. N281 is an active-site residue.

The protein belongs to the thiolase-like superfamily. FabH family. In terms of assembly, homodimer.

It is found in the cytoplasm. It carries out the reaction malonyl-[ACP] + acetyl-CoA + H(+) = 3-oxobutanoyl-[ACP] + CO2 + CoA. It participates in lipid metabolism; fatty acid biosynthesis. Its function is as follows. Catalyzes the condensation reaction of fatty acid synthesis by the addition to an acyl acceptor of two carbons from malonyl-ACP. Catalyzes the first condensation reaction which initiates fatty acid synthesis and may therefore play a role in governing the total rate of fatty acid production. Possesses both acetoacetyl-ACP synthase and acetyl transacylase activities. Its substrate specificity determines the biosynthesis of branched-chain and/or straight-chain of fatty acids. This chain is Beta-ketoacyl-[acyl-carrier-protein] synthase III, found in Bartonella henselae (strain ATCC 49882 / DSM 28221 / CCUG 30454 / Houston 1) (Rochalimaea henselae).